The chain runs to 378 residues: D-alanine--D-alanine ligase (378 aa).

Residues 149 to 374 (KVLLRAAGIP…FRTVVTDLIE (226 aa)) form the ATP-grasp domain. 189–247 (EAGLQYPLFVKPSRAGSSFGVTKVEQIGDAAALAAAVFEASRHDWRVLVEQGIDAREIE) contributes to the ATP binding site. Positions 328, 341, and 343 each coordinate Mg(2+).

Belongs to the D-alanine--D-alanine ligase family. Mg(2+) is required as a cofactor. Requires Mn(2+) as cofactor.

It localises to the cytoplasm. The enzyme catalyses 2 D-alanine + ATP = D-alanyl-D-alanine + ADP + phosphate + H(+). The protein operates within cell wall biogenesis; peptidoglycan biosynthesis. Its function is as follows. Cell wall formation. The sequence is that of D-alanine--D-alanine ligase from Bifidobacterium animalis subsp. lactis (strain AD011).